Reading from the N-terminus, the 292-residue chain is 4-hydroxy-tetrahydrodipicolinate synthase (292 aa).

A pyruvate-binding site is contributed by T45. Y133 acts as the Proton donor/acceptor in catalysis. K161 acts as the Schiff-base intermediate with substrate in catalysis. I203 contributes to the pyruvate binding site.

Belongs to the DapA family. As to quaternary structure, homotetramer; dimer of dimers.

It is found in the cytoplasm. The enzyme catalyses L-aspartate 4-semialdehyde + pyruvate = (2S,4S)-4-hydroxy-2,3,4,5-tetrahydrodipicolinate + H2O + H(+). It participates in amino-acid biosynthesis; L-lysine biosynthesis via DAP pathway; (S)-tetrahydrodipicolinate from L-aspartate: step 3/4. Functionally, catalyzes the condensation of (S)-aspartate-beta-semialdehyde [(S)-ASA] and pyruvate to 4-hydroxy-tetrahydrodipicolinate (HTPA). The protein is 4-hydroxy-tetrahydrodipicolinate synthase of Nitrosomonas europaea (strain ATCC 19718 / CIP 103999 / KCTC 2705 / NBRC 14298).